The following is a 185-amino-acid chain: Ribosome-recycling factor (185 aa).

It belongs to the RRF family.

It is found in the cytoplasm. Its function is as follows. Responsible for the release of ribosomes from messenger RNA at the termination of protein biosynthesis. May increase the efficiency of translation by recycling ribosomes from one round of translation to another. Functionally, plays a role in sporulation. The sequence is that of Ribosome-recycling factor from Bacillus subtilis (strain 168).